The sequence spans 616 residues: Membrane protein insertase YidC (616 aa).

A helical membrane pass occupies residues Ile9–Pro29. Positions Gln37–Pro80 are disordered. The segment covering Leu44–Thr71 has biased composition (polar residues). Helical transmembrane passes span Phe388–Phe408, Leu462–Ile482, Val520–Phe540, and Trp559–Trp579.

This sequence belongs to the OXA1/ALB3/YidC family. Type 1 subfamily. Interacts with the Sec translocase complex via SecD. Specifically interacts with transmembrane segments of nascent integral membrane proteins during membrane integration.

The protein localises to the cell inner membrane. Required for the insertion and/or proper folding and/or complex formation of integral membrane proteins into the membrane. Involved in integration of membrane proteins that insert both dependently and independently of the Sec translocase complex, as well as at least some lipoproteins. Aids folding of multispanning membrane proteins. The sequence is that of Membrane protein insertase YidC from Bradyrhizobium diazoefficiens (strain JCM 10833 / BCRC 13528 / IAM 13628 / NBRC 14792 / USDA 110).